The chain runs to 138 residues: Acidic phospholipase A2 6 (138 aa).

A signal peptide spans 1-16 (MRTLWIMAVLLVGVEG). Cystine bridges form between cysteine 42–cysteine 131, cysteine 44–cysteine 60, cysteine 59–cysteine 111, cysteine 65–cysteine 138, cysteine 66–cysteine 104, cysteine 73–cysteine 97, and cysteine 91–cysteine 102. Residues tyrosine 43, glycine 45, and glycine 47 each contribute to the Ca(2+) site. Residue histidine 63 is part of the active site. Residue aspartate 64 coordinates Ca(2+). Aspartate 105 is an active-site residue.

Belongs to the phospholipase A2 family. Group II subfamily. D49 sub-subfamily. As to quaternary structure, homodimer. It depends on Ca(2+) as a cofactor. As to expression, expressed by the venom gland.

Its subcellular location is the secreted. It carries out the reaction a 1,2-diacyl-sn-glycero-3-phosphocholine + H2O = a 1-acyl-sn-glycero-3-phosphocholine + a fatty acid + H(+). Snake venom phospholipase A2 (PLA2) that has high lipolytic activity. PLA2 catalyzes the calcium-dependent hydrolysis of the 2-acyl groups in 3-sn-phosphoglycerides. The protein is Acidic phospholipase A2 6 of Craspedocephalus gramineus (Bamboo pit viper).